Reading from the N-terminus, the 111-residue chain is Large ribosomal subunit protein uL22 (111 aa).

It belongs to the universal ribosomal protein uL22 family. In terms of assembly, part of the 50S ribosomal subunit.

In terms of biological role, this protein binds specifically to 23S rRNA; its binding is stimulated by other ribosomal proteins, e.g. L4, L17, and L20. It is important during the early stages of 50S assembly. It makes multiple contacts with different domains of the 23S rRNA in the assembled 50S subunit and ribosome. Its function is as follows. The globular domain of the protein is located near the polypeptide exit tunnel on the outside of the subunit, while an extended beta-hairpin is found that lines the wall of the exit tunnel in the center of the 70S ribosome. This Clostridium perfringens (strain ATCC 13124 / DSM 756 / JCM 1290 / NCIMB 6125 / NCTC 8237 / Type A) protein is Large ribosomal subunit protein uL22.